Here is a 529-residue protein sequence, read N- to C-terminus: Serine/threonine-protein kinase RIO2 (529 aa).

In terms of domain architecture, Protein kinase spans 97–273 (VGNQIGIGKE…RDVTCVRTFF (177 aa)). Lysine 123 contacts ATP. Aspartate 228 acts as the Proton acceptor in catalysis. Disordered stretches follow at residues 331-366 (RNRQEEDLGEDEDDSDDSKSMEDIQEEPEDLEKDHE) and 411-452 (EGYK…GHVA). The span at 337 to 346 (DLGEDEDDSD) shows a compositional bias: acidic residues. Basic and acidic residues predominate over residues 411 to 428 (EGYKDIELPPEDFKRPAD). The span at 429-447 (SENDDENDEDEEEGEEEDA) shows a compositional bias: acidic residues.

The protein belongs to the protein kinase superfamily. RIO-type Ser/Thr kinase family. The cofactor is Mg(2+). As to expression, expressed in pharynx (metacorpus and posterior bulbus). Expression is restricted to adult stage.

It carries out the reaction L-seryl-[protein] + ATP = O-phospho-L-seryl-[protein] + ADP + H(+). The enzyme catalyses L-threonyl-[protein] + ATP = O-phospho-L-threonyl-[protein] + ADP + H(+). Functionally, required for larval development. This is Serine/threonine-protein kinase RIO2 from Caenorhabditis elegans.